Here is a 104-residue protein sequence, read N- to C-terminus: Large ribosomal subunit protein uL24 (104 aa).

This sequence belongs to the universal ribosomal protein uL24 family. As to quaternary structure, part of the 50S ribosomal subunit.

Its function is as follows. One of two assembly initiator proteins, it binds directly to the 5'-end of the 23S rRNA, where it nucleates assembly of the 50S subunit. One of the proteins that surrounds the polypeptide exit tunnel on the outside of the subunit. In Hydrogenovibrio crunogenus (strain DSM 25203 / XCL-2) (Thiomicrospira crunogena), this protein is Large ribosomal subunit protein uL24.